A 238-amino-acid chain; its full sequence is N-(5'-phosphoribosyl)anthranilate isomerase (238 aa).

Belongs to the TrpF family.

The catalysed reaction is N-(5-phospho-beta-D-ribosyl)anthranilate = 1-(2-carboxyphenylamino)-1-deoxy-D-ribulose 5-phosphate. It participates in amino-acid biosynthesis; L-tryptophan biosynthesis; L-tryptophan from chorismate: step 3/5. This Methanosarcina acetivorans (strain ATCC 35395 / DSM 2834 / JCM 12185 / C2A) protein is N-(5'-phosphoribosyl)anthranilate isomerase.